A 221-amino-acid chain; its full sequence is Iron-sulfur cluster repair protein YtfE (221 aa).

It belongs to the RIC family. YtfE subfamily. Homodimer.

The protein resides in the cytoplasm. Its function is as follows. Di-iron-containing protein involved in the repair of iron-sulfur clusters damaged by oxidative and nitrosative stress conditions. This Yersinia pseudotuberculosis serotype IB (strain PB1/+) protein is Iron-sulfur cluster repair protein YtfE.